The following is a 275-amino-acid chain: MAGQAGSLQGRVAFITGAARGQGRSHAVRLAAEGADIIACDICAPVSASVTYAPASPEDLDETARLVEDQGRKALTRVLDVRDDAALRELVADGMEQFGRLDVVVANAGVLSWGRVWELTDEQWDTVIGVNLTGTWRTLRATVPAMIEAGNGGSIVVVSSSAGLKATPGNGHYSASKHGLTALTNTLAIELGEYGIRVNSIHPYSVETPMIEPEAMMEIFARHPSFVHSFPPMPVQPNGFMTADEVADVVAWLAGDGSGTLTGTQIPVDKGALKY.

NAD(+) contacts are provided by residues 20 to 22, 41 to 42, 80 to 81, and asparagine 107; these read RGQ, DI, and DV. Serine 160 provides a ligand contact to substrate. Tyrosine 173 serves as the catalytic Proton acceptor. Residues lysine 177 and 206 to 208 each bind NAD(+); that span reads VET.

The protein belongs to the short-chain dehydrogenases/reductases (SDR) family.

This is an uncharacterized protein from Mycolicibacterium paratuberculosis (strain ATCC BAA-968 / K-10) (Mycobacterium paratuberculosis).